An 88-amino-acid polypeptide reads, in one-letter code: Putative defensin-like protein 264 (88 aa).

The first 26 residues, 1 to 26 (MEKMVLRKVVLLAILLSLSCLWVAKA), serve as a signal peptide directing secretion. 3 cysteine pairs are disulfide-bonded: Cys-47-Cys-65, Cys-53-Cys-70, and Cys-57-Cys-72.

Belongs to the DEFL family.

The protein resides in the secreted. In Arabidopsis thaliana (Mouse-ear cress), this protein is Putative defensin-like protein 264.